Consider the following 320-residue polypeptide: Transcription factor bHLH34 (320 aa).

The region spanning S162–L213 is the bHLH domain. The tract at residues W299–A320 is disordered. A compositionally biased stretch (basic and acidic residues) spans A305–K314.

As to quaternary structure, homodimer. As to expression, expressed constitutively in roots, leaves, stems, and flowers.

The protein localises to the nucleus. The sequence is that of Transcription factor bHLH34 (BHLH34) from Arabidopsis thaliana (Mouse-ear cress).